Here is a 4467-residue protein sequence, read N- to C-terminus: Protocadherin-like protein (4467 aa).

The first 22 residues, 1 to 22 (MRGINAIVGFLLCFCLLHRINT), serve as a signal peptide directing secretion. 28 Cadherin domains span residues 23 to 128 (AVQF…SPTF), 129 to 238 (PQHL…SPVF), 239 to 350 (EKKS…VPVF), 351 to 455 (QEES…TPVF), 459 to 566 (NPQQ…NPDF), 567 to 664 (SKVV…PPTF), 665 to 764 (KNAP…PPTF), 765 to 884 (SRSS…SPEF), 885 to 994 (SQTS…PPLF), 1092 to 1197 (EAQP…QPRF), 1290 to 1395 (SRTV…SPKF), 1396 to 1499 (SADS…PPKF), 1495 to 1597 (GPPK…EPQF), 1601 to 1701 (SNGF…QPVR), 1793 to 1891 (TMID…KPQF), 1892 to 1992 (SESA…YPKF), 1993 to 2100 (EPNL…KPQF), 2101 to 2202 (LESD…RPVF), 2203 to 2312 (TDCP…FPFF), 2313 to 2423 (LTRT…PPAF), 2425 to 2529 (PSAV…TPTF), 2530 to 2639 (KLEE…PPIF), 2640 to 2746 (PKPS…IPKF), 2747 to 2849 (DNLI…SPYF), 2850 to 2954 (PNPP…APVF), 2955 to 3062 (NPRE…PPVF), 3063 to 3170 (VPAE…GPWF), and 3173 to 3288 (RYYE…EPFD). Residues 23 to 4258 (AVQFKQEILE…RPSSRWANPA (4236 aa)) are Extracellular-facing. The region spanning 3551–3589 (PDINCTTGTPCLHGGTCHNAVPKGIICECGRDYLGPECQ) is the EGF-like 1 domain. Intrachain disulfides connect Cys3555/Cys3567, Cys3561/Cys3577, Cys3579/Cys3588, Cys3762/Cys3788, Cys3794/Cys3803, Cys3797/Cys3812, and Cys3814/Cys3823. Residues 3590 to 3788 (STTRTFRGNS…LKEVNTELGC (199 aa)) enclose the Laminin G-like 1 domain. Residues 3790-3824 (LNNQCPNCNGRGYCEPFWNYAICVCDLGFGGANCD) form the EGF-like 2 domain. Positions 3842–4096 (VKQVKRKRRE…KVIISSSGGS (255 aa)) constitute a Laminin G-like 2 domain. The segment at 4089 to 4118 (IISSSGGSVSGGSGGASGGSGGASGSGGSV) is disordered. The span at 4096–4118 (SVSGGSGGASGGSGGASGSGGSV) shows a compositional bias: gly residues. An EGF-like 3 domain is found at 4206–4238 (PCGSNFCRHGGTCVSADPPYCLCPVGWSGPVCE). 3 disulfide bridges follow: Cys4207–Cys4218, Cys4212–Cys4226, and Cys4228–Cys4237. A helical membrane pass occupies residues 4259–4279 (VIACILVILLAILVIIGAVLL). Over 4280–4467 (KRRPQPAVVA…NLNRIFNEDE (188 aa)) the chain is Cytoplasmic. Positions 4424–4445 (DVDDLSELGDSDEEPDEEEEQE) are disordered.

In terms of tissue distribution, component of the acid-insoluble organic matrix of the aragonitic skeleton (at protein level).

Its subcellular location is the membrane. This is Protocadherin-like protein from Acropora millepora (Staghorn coral).